The following is a 295-amino-acid chain: Farnesyl diphosphate synthase (295 aa).

3 residues coordinate isopentenyl diphosphate: Lys46, Arg49, and His78. Residues Asp85 and Asp91 each contribute to the Mg(2+) site. Arg96 serves as a coordination point for (2E)-geranyl diphosphate. Arg97 provides a ligand contact to isopentenyl diphosphate. (2E)-geranyl diphosphate contacts are provided by Lys180, Thr181, Gln220, and Lys237.

It belongs to the FPP/GGPP synthase family. Mg(2+) serves as cofactor.

The protein resides in the cytoplasm. The catalysed reaction is isopentenyl diphosphate + (2E)-geranyl diphosphate = (2E,6E)-farnesyl diphosphate + diphosphate. The polypeptide is Farnesyl diphosphate synthase (ispA) (Haemophilus influenzae (strain ATCC 51907 / DSM 11121 / KW20 / Rd)).